Reading from the N-terminus, the 446-residue chain is Tubulin beta-1 chain (446 aa).

Positions 1 to 4 (MREI) match the MREI motif motif. The GTP site is built by Gln11, Glu69, Ser138, Gly142, Thr143, Gly144, Asn204, and Asn226. Mg(2+) is bound at residue Glu69. A disordered region spans residues 426-446 (QDATAEEEGEFEEEGEYEDGA). A compositionally biased stretch (acidic residues) spans 429 to 446 (TAEEEGEFEEEGEYEDGA). Glu438 carries the 5-glutamyl polyglutamate modification.

This sequence belongs to the tubulin family. Dimer of alpha and beta chains. A typical microtubule is a hollow water-filled tube with an outer diameter of 25 nm and an inner diameter of 15 nM. Alpha-beta heterodimers associate head-to-tail to form protofilaments running lengthwise along the microtubule wall with the beta-tubulin subunit facing the microtubule plus end conferring a structural polarity. Microtubules usually have 13 protofilaments but different protofilament numbers can be found in some organisms and specialized cells. It depends on Mg(2+) as a cofactor. Some glutamate residues at the C-terminus are polyglycylated, resulting in polyglycine chains on the gamma-carboxyl group. Glycylation is mainly limited to tubulin incorporated into axonemes (cilia and flagella) whereas glutamylation is prevalent in neuronal cells, centrioles, axonemes, and the mitotic spindle. Both modifications can coexist on the same protein on adjacent residues, and lowering polyglycylation levels increases polyglutamylation, and reciprocally. The precise function of polyglycylation is still unclear. Post-translationally, some glutamate residues at the C-terminus are polyglutamylated, resulting in polyglutamate chains on the gamma-carboxyl group. Polyglutamylation plays a key role in microtubule severing by spastin (SPAST). SPAST preferentially recognizes and acts on microtubules decorated with short polyglutamate tails: severing activity by SPAST increases as the number of glutamates per tubulin rises from one to eight, but decreases beyond this glutamylation threshold. As to expression, brain.

Its subcellular location is the cytoplasm. The protein localises to the cytoskeleton. Functionally, tubulin is the major constituent of microtubules, a cylinder consisting of laterally associated linear protofilaments composed of alpha- and beta-tubulin heterodimers. Microtubules grow by the addition of GTP-tubulin dimers to the microtubule end, where a stabilizing cap forms. Below the cap, tubulin dimers are in GDP-bound state, owing to GTPase activity of alpha-tubulin. The protein is Tubulin beta-1 chain (tubb1) of Notothenia neglecta (Yellowbelly rockcod).